We begin with the raw amino-acid sequence, 267 residues long: Potassium channel regulatory protein (267 aa).

A BTB domain is found at 5–74; sequence ELVTLNVGGK…LRTQQLLLPT (70 aa).

Can form homooligomers. Interacts with KCNA1 (via cytoplasmic N-terminal domain) and KCNA4.

It is found in the endoplasmic reticulum. In terms of biological role, inhibits potassium fluxes in cells. May regulate Kv1 family channel proteins by retaining a fraction of channels in endomembranes. This Bos taurus (Bovine) protein is Potassium channel regulatory protein (KCNRG).